The sequence spans 132 residues: Small ribosomal subunit protein uS8 (132 aa).

It belongs to the universal ribosomal protein uS8 family. In terms of assembly, part of the 30S ribosomal subunit. Contacts proteins S5 and S12.

In terms of biological role, one of the primary rRNA binding proteins, it binds directly to 16S rRNA central domain where it helps coordinate assembly of the platform of the 30S subunit. This Psychrobacter sp. (strain PRwf-1) protein is Small ribosomal subunit protein uS8.